The following is a 109-amino-acid chain: Large ribosomal subunit protein uL24 (109 aa).

It belongs to the universal ribosomal protein uL24 family. In terms of assembly, part of the 50S ribosomal subunit.

Functionally, one of two assembly initiator proteins, it binds directly to the 5'-end of the 23S rRNA, where it nucleates assembly of the 50S subunit. In terms of biological role, one of the proteins that surrounds the polypeptide exit tunnel on the outside of the subunit. The sequence is that of Large ribosomal subunit protein uL24 from Syntrophobacter fumaroxidans (strain DSM 10017 / MPOB).